A 183-amino-acid chain; its full sequence is NAD(P)H-quinone oxidoreductase subunit I, chloroplastic (183 aa).

2 4Fe-4S ferredoxin-type domains span residues 55 to 84 and 95 to 124; these read GRIH…VDWE and TSYS…MTEE. The [4Fe-4S] cluster site is built by cysteine 64, cysteine 67, cysteine 70, cysteine 74, cysteine 104, cysteine 107, cysteine 110, and cysteine 114.

It belongs to the complex I 23 kDa subunit family. In terms of assembly, NDH is composed of at least 16 different subunits, 5 of which are encoded in the nucleus. The cofactor is [4Fe-4S] cluster.

It localises to the plastid. Its subcellular location is the chloroplast thylakoid membrane. It catalyses the reaction a plastoquinone + NADH + (n+1) H(+)(in) = a plastoquinol + NAD(+) + n H(+)(out). The enzyme catalyses a plastoquinone + NADPH + (n+1) H(+)(in) = a plastoquinol + NADP(+) + n H(+)(out). NDH shuttles electrons from NAD(P)H:plastoquinone, via FMN and iron-sulfur (Fe-S) centers, to quinones in the photosynthetic chain and possibly in a chloroplast respiratory chain. The immediate electron acceptor for the enzyme in this species is believed to be plastoquinone. Couples the redox reaction to proton translocation, and thus conserves the redox energy in a proton gradient. In Huperzia lucidula (Shining clubmoss), this protein is NAD(P)H-quinone oxidoreductase subunit I, chloroplastic.